We begin with the raw amino-acid sequence, 61 residues long: Small ribosomal subunit protein uS14B (61 aa).

Residues cysteine 24, cysteine 27, cysteine 40, and cysteine 43 each contribute to the Zn(2+) site.

This sequence belongs to the universal ribosomal protein uS14 family. Zinc-binding uS14 subfamily. As to quaternary structure, part of the 30S ribosomal subunit. Contacts proteins S3 and S10. Zn(2+) is required as a cofactor.

Functionally, binds 16S rRNA, required for the assembly of 30S particles and may also be responsible for determining the conformation of the 16S rRNA at the A site. This Lacticaseibacillus paracasei (strain ATCC 334 / BCRC 17002 / CCUG 31169 / CIP 107868 / KCTC 3260 / NRRL B-441) (Lactobacillus paracasei) protein is Small ribosomal subunit protein uS14B.